Consider the following 297-residue polypeptide: Phosphatidylinositol N-acetylglucosaminyltransferase subunit C (297 aa).

The next 4 helical transmembrane spans lie at 67–87, 88–108, 153–173, and 239–259; these read VFVVIWWYMDEGLLAPQWLFG, TGLASSLVGYVLFDLIDGGDG, SVFMLLGHLIFFDYGANAAIV, and AFGGLLSISGVGAILFALLLF.

It belongs to the PIGC family. Component of the glycosylphosphatidylinositol-N-acetylglucosaminyltransferase (GPI-GnT) complex composed at least by PIGA, PIGC, PIGH, PIGP, PIGQ, PIGY and DPM2. Interacts with PIGQ. Interacts with the heterodimer PIGA:PIGH.

Its subcellular location is the endoplasmic reticulum membrane. Its pathway is glycolipid biosynthesis; glycosylphosphatidylinositol-anchor biosynthesis. In terms of biological role, part of the glycosylphosphatidylinositol-N-acetylglucosaminyltransferase (GPI-GnT) complex that catalyzes the transfer of N-acetylglucosamine from UDP-N-acetylglucosamine to phosphatidylinositol and participates in the first step of GPI biosynthesis. The polypeptide is Phosphatidylinositol N-acetylglucosaminyltransferase subunit C (Rattus norvegicus (Rat)).